A 345-amino-acid chain; its full sequence is Sesquiterpene synthase PILCRDRAFT_825684 (345 aa).

Residues Asp91, Asn226, Ser230, and Glu234 each contribute to the Mg(2+) site. A DDXXD motif motif is present at residues 91–95 (DELTD). Positions 316 and 317 each coordinate (2E,6E)-farnesyl diphosphate.

It belongs to the terpene synthase family. It depends on Mg(2+) as a cofactor.

The catalysed reaction is (2E,6E)-farnesyl diphosphate = viridiflorene + diphosphate. Terpene cyclase that catalyzes the cyclization of farnesyl diphosphate (FPP) to various sesquiterpenes, including beta-elemene, viridiflorene and gamma-cadinene. Gamma-cadinene is the major product of PILCRDRAFT_825684. This Piloderma croceum (strain F 1598) protein is Sesquiterpene synthase PILCRDRAFT_825684.